Reading from the N-terminus, the 532-residue chain is CTP synthase (532 aa).

Residues 1–267 (MTKYIFVTGG…DDIVLEHLQL (267 aa)) form an amidoligase domain region. Residue Ser-13 coordinates CTP. A UTP-binding site is contributed by Ser-13. 14–19 (SIGKGI) provides a ligand contact to ATP. Tyr-54 is a binding site for L-glutamine. Residue Asp-71 participates in ATP binding. Asp-71 and Glu-141 together coordinate Mg(2+). CTP-binding positions include 148–150 (DIE), 188–193 (KTKPTQ), and Lys-224. UTP is bound by residues 188–193 (KTKPTQ) and Lys-224. The Glutamine amidotransferase type-1 domain maps to 292–532 (RIGLVGKYVS…DFVGAALKNK (241 aa)). An L-glutamine-binding site is contributed by Gly-354. The Nucleophile; for glutamine hydrolysis role is filled by Cys-381. L-glutamine is bound by residues 382–385 (LGMQ), Glu-405, and Arg-462. Catalysis depends on residues His-507 and Glu-509.

The protein belongs to the CTP synthase family. As to quaternary structure, homotetramer.

It carries out the reaction UTP + L-glutamine + ATP + H2O = CTP + L-glutamate + ADP + phosphate + 2 H(+). The catalysed reaction is L-glutamine + H2O = L-glutamate + NH4(+). The enzyme catalyses UTP + NH4(+) + ATP = CTP + ADP + phosphate + 2 H(+). The protein operates within pyrimidine metabolism; CTP biosynthesis via de novo pathway; CTP from UDP: step 2/2. Allosterically activated by GTP, when glutamine is the substrate; GTP has no effect on the reaction when ammonia is the substrate. The allosteric effector GTP functions by stabilizing the protein conformation that binds the tetrahedral intermediate(s) formed during glutamine hydrolysis. Inhibited by the product CTP, via allosteric rather than competitive inhibition. Catalyzes the ATP-dependent amination of UTP to CTP with either L-glutamine or ammonia as the source of nitrogen. Regulates intracellular CTP levels through interactions with the four ribonucleotide triphosphates. The sequence is that of CTP synthase from Listeria monocytogenes serovar 1/2a (strain ATCC BAA-679 / EGD-e).